Here is a 154-residue protein sequence, read N- to C-terminus: Myoglobin (154 aa).

The Globin domain maps to 1 to 147 (MADVKKNCLA…FNDECQHQLA (147 aa)). H96 contributes to the heme b binding site.

It belongs to the globin family.

The protein resides in the cytoplasm. In Nippostrongylus brasiliensis (Rat hookworm), this protein is Myoglobin (GLBB).